The following is a 396-amino-acid chain: Ribosomal RNA large subunit methyltransferase I (396 aa).

Residues 2-81 (SVRLVLAKGR…ESIDIAFFSR (80 aa)) form the PUA domain.

Belongs to the methyltransferase superfamily. RlmI family.

The protein localises to the cytoplasm. It catalyses the reaction cytidine(1962) in 23S rRNA + S-adenosyl-L-methionine = 5-methylcytidine(1962) in 23S rRNA + S-adenosyl-L-homocysteine + H(+). In terms of biological role, specifically methylates the cytosine at position 1962 (m5C1962) of 23S rRNA. The protein is Ribosomal RNA large subunit methyltransferase I of Shigella boydii serotype 18 (strain CDC 3083-94 / BS512).